The following is a 476-amino-acid chain: Salicylate biosynthesis isochorismate synthase (476 aa).

Positions 181 to 202 (RRRPSGPTAGAQGDASAQERRQ) are disordered.

This sequence belongs to the isochorismate synthase family.

It catalyses the reaction chorismate = isochorismate. It participates in siderophore biosynthesis; salicylate biosynthesis. Its function is as follows. Involved in the conversion of chorismate to salicylate. This chain is Salicylate biosynthesis isochorismate synthase (pchA), found in Pseudomonas aeruginosa (strain ATCC 15692 / DSM 22644 / CIP 104116 / JCM 14847 / LMG 12228 / 1C / PRS 101 / PAO1).